We begin with the raw amino-acid sequence, 272 residues long: Glutamate racemase (272 aa).

Substrate contacts are provided by residues 16 to 17 (DS) and 48 to 49 (YG). C79 functions as the Proton donor/acceptor in the catalytic mechanism. Position 80–81 (80–81 (NT)) interacts with substrate. The Proton donor/acceptor role is filled by C191. 192-193 (TH) is a binding site for substrate.

Belongs to the aspartate/glutamate racemases family.

It catalyses the reaction L-glutamate = D-glutamate. It functions in the pathway cell wall biogenesis; peptidoglycan biosynthesis. Its function is as follows. Provides the (R)-glutamate required for cell wall biosynthesis. The protein is Glutamate racemase of Chlorobium phaeobacteroides (strain DSM 266 / SMG 266 / 2430).